The following is a 311-amino-acid chain: MEKASLNIAQTKEIPLTDRRMGLRGWKACSRPHLLGRILLFMSILFITSAELSSDVSSREVYMPIFNNKLSFKVPPIKRSLLLGAALYEDFEYSSNNSASDGAFCTVFNAGMNDASREVVFEIHVMDVLQEETDSSRFGGTSHERGRQSLGFSVFNNKNGDLLRSKKNLASGTSVIEVNPGNCNEFLICFINLVYDGSWSSIDTEKSVTIKMTYNDKLDPDMLLHLVNQMTPQVVKALNTVSDGLFQIVSDTTLLQMESDRRDINEATYSYLIVGFVSLMVAQLISNIIVTTYLIIKIKSNPSSHIKKKGL.

A run of 2 helical transmembrane segments spans residues 32 to 52 and 271 to 291; these read PHLL…SAEL and YLIV…IIVT.

It localises to the membrane. Functionally, may be involved in the modulation of rDNA transcription. The protein is Regulator of rDNA transcription protein 6 (RRT6) of Saccharomyces cerevisiae (strain ATCC 204508 / S288c) (Baker's yeast).